Here is a 571-residue protein sequence, read N- to C-terminus: Leucine aminopeptidase A1, chloroplastic (571 aa).

The transit peptide at 1–53 (MATLRVSSLFASSSSSLHSNPSVFTKYQSSPKWAFSFPVTPLCSKRSKRIVHC) directs the protein to the chloroplast. Residues Lys-342 and Asp-347 each coordinate Mg(2+). Residue Lys-354 is part of the active site. Asp-367, Asp-427, and Glu-429 together coordinate Mg(2+). Arg-431 is an active-site residue.

This sequence belongs to the peptidase M17 family. In terms of assembly, homohexamer (dimer of homotrimers). It depends on Mg(2+) as a cofactor. As to expression, observed during floral development. Expressed in healthy and senescent leaves, cotyledons (emergence from seed coats), pistils, sepals, petals, stamens, and floral buds (at protein level). Present at very low levels in healthy leaves.

It localises to the plastid. The protein resides in the chloroplast. It carries out the reaction Release of an N-terminal amino acid, Xaa-|-Yaa-, in which Xaa is preferably Leu, but may be other amino acids including Pro although not Arg or Lys, and Yaa may be Pro. Amino acid amides and methyl esters are also readily hydrolyzed, but rates on arylamides are exceedingly low.. It catalyses the reaction Release of N-terminal proline from a peptide.. In terms of biological role, catalyzes the removal of unsubstituted N-terminal amino acids from various peptides. When associated as homohexamer, catalyzes the proteolyzes of Xaa-Leu dipeptides. Possesses leucine aminopeptidase activity against the model substrate leucine-amido methyl coumarin. Presumably involved in the processing and regular turnover of intracellular proteins. Regulates wound signaling and has a role in insect defense. Its function is as follows. Functions as a molecular chaperone to protect proteins from heat-induced damage. This Solanum lycopersicum (Tomato) protein is Leucine aminopeptidase A1, chloroplastic.